Consider the following 347-residue polypeptide: Microfibril-associated glycoprotein 3 (347 aa).

A signal peptide spans 1-22 (MKLHYCLCILLVVTFVPTALVL). Topologically, residues 23 to 139 (EDVTPLGTNQ…TLRVIFTSGD (117 aa)) are extracellular. Asparagine 31, asparagine 36, asparagine 63, and asparagine 103 each carry an N-linked (GlcNAc...) asparagine glycan. The Ig-like C2-type domain occupies 47-130 (AGSYSGDDVI…SPTRASYSVT (84 aa)). An intrachain disulfide couples cysteine 68 to cysteine 117. A helical membrane pass occupies residues 140-160 (MSVYYMVVCLIAFTITLILNV). Over 161–347 (TRLCLMSTHL…SAEGSTHHRE (187 aa)) the chain is Cytoplasmic. The segment at 280 to 347 (NPELGRSNSP…SAEGSTHHRE (68 aa)) is disordered. Residues 311–331 (VHLQSETKSIGTDSQDSSHFS) are compositionally biased toward polar residues.

In terms of processing, glycosylated.

Its subcellular location is the cell membrane. In terms of biological role, component of the elastin-associated microfibrils. The polypeptide is Microfibril-associated glycoprotein 3 (Mfap3) (Rattus norvegicus (Rat)).